An 878-amino-acid polypeptide reads, in one-letter code: Pyruvate, phosphate dikinase (878 aa).

Residues 1–347 (MKKLIYYFGS…LYILQTRTAK (347 aa)) form an N-terminal region. Arg-96 contributes to the ATP binding site. The interval 348–404 (RTAIAAINIAVQMVEEKLISKEQALMRIDPESLNQLLHTRIDYSKGLTSIAEGLPAS) is linker 1. The tract at residues 405–502 (PGAATGIAVF…VIKQGDIITI (98 aa)) is central. A Phosphothreonine; by PDRP1 modification is found at Thr-457. The Tele-phosphohistidine intermediate role is filled by His-459. The segment at 503–537 (DGGSGKIFLGEMPLIQPTFSEESKLILDWADEISS) is linker 2. The interval 538-878 (LKVRANAETV…ASAQAKIKHG (341 aa)) is C-terminal. Substrate is bound by residues Arg-565, Arg-621, Glu-749, Gly-770, Thr-771, Asn-772, and Asp-773. Residue Glu-749 coordinates Mg(2+). Asp-773 is a binding site for Mg(2+). Catalysis depends on Cys-835, which acts as the Proton donor.

The protein belongs to the PEP-utilizing enzyme family. As to quaternary structure, homodimer. Mg(2+) serves as cofactor. Phosphorylation of Thr-457 in the dark inactivates the enzyme. Dephosphorylation upon light stimulation reactivates the enzyme.

The enzyme catalyses pyruvate + phosphate + ATP = phosphoenolpyruvate + AMP + diphosphate + H(+). Activated by light-induced dephosphorylation. Inhibited by dark-induced phosphorylation. Both reactions are catalyzed by PDRP1. In terms of biological role, catalyzes the reversible phosphorylation of pyruvate and phosphate. In Rickettsia felis (strain ATCC VR-1525 / URRWXCal2) (Rickettsia azadi), this protein is Pyruvate, phosphate dikinase (ppdK).